A 192-amino-acid chain; its full sequence is UPF0149 protein KPK_0755 (192 aa).

Belongs to the UPF0149 family.

This Klebsiella pneumoniae (strain 342) protein is UPF0149 protein KPK_0755.